A 595-amino-acid chain; its full sequence is Threonine dehydratase 2 biosynthetic, chloroplastic (595 aa).

The N-terminal 51 residues, 1–51 (MEFLCLAPTRSFSTNPKLTKSIPSDHTSTTSRIFTYQNMRGSTMRPLALPL), are a transit peptide targeting the chloroplast. N6-(pyridoxal phosphate)lysine is present on lysine 143. 2 consecutive ACT-like domains span residues 420–492 (ALLA…NLSH) and 514–585 (IFGE…LDNY).

It belongs to the serine/threonine dehydratase family. As to quaternary structure, homotetramer. Pyridoxal 5'-phosphate serves as cofactor. Proteolytically cleaved by a chymotrypsin-like digestive protease in the midgut of the lepidopteran insects to remove the C-terminal regulatory domain, which allows efficient metabolizing of threonine in the presence of high isoleucine levels in the gut. Expressed in floral buds, 8-9 mm long flowers 1 to 2 days before anthesis, open flowers and floral organs including sepals, petals, stamens and carpels of 8-9 mm flowers (at protein level). Expressed in very early floral meristems of the anantha. Over 500-fold expression in mature flowers compared to leaves. Expressed in sepals, petals, stamens and carpels of the mature flower. In sepals, mostly expressed in the abaxial mesophyll cells and in petals in parenchymal cells. Not expressed in epidermal or vascular tissues of sepals and petals. In stamens, expressed in parenchymal cells of the connective and lobes, but not expressed in differentiated tissues such as tapetum (TP), stomium (SM), or pollen grains (PG). Not expressed in roots or seeds. High level of expression in immature flower buds, unopened flowers and opened flowers. Not expressed in unstressed leaves, root, stem or petiole.

It is found in the plastid. The protein localises to the chloroplast. It catalyses the reaction L-threonine = 2-oxobutanoate + NH4(+). The enzyme catalyses L-serine = pyruvate + NH4(+). Its pathway is amino-acid biosynthesis; L-isoleucine biosynthesis; 2-oxobutanoate from L-threonine: step 1/1. Threonine dehydratase 2 biosynthetic, chloroplastic: Strongly inhibited by 1 mM isoleucine. Processed threonine dehydratase 2: Not inhibited by isoleucine. Its function is as follows. Not required for normal growth and development of the plant. In terms of biological role, involved in defense against lepidopteran, but not coleopteran herbivore insects. Acts in the insect gut to degrade threonine, which is an essential and limiting nutrient for the growth of lepidopteran larvae. Active against both L-threonine and L-serine. The sequence is that of Threonine dehydratase 2 biosynthetic, chloroplastic from Solanum lycopersicum (Tomato).